The sequence spans 63 residues: Large ribosomal subunit protein uL29 (63 aa).

Belongs to the universal ribosomal protein uL29 family.

This is Large ribosomal subunit protein uL29 from Aeromonas salmonicida (strain A449).